Here is a 232-residue protein sequence, read N- to C-terminus: NKG2-D type II integral membrane protein (232 aa).

Over 1 to 66 (MALIRDRKSH…IEKLKISPMF (66 aa)) the chain is Cytoplasmic. A helical; Signal-anchor for type II membrane protein membrane pass occupies residues 67–89 (VVRVLAIALAIRFTLNTLMWLAI). Over 90–232 (FKETFQPVLC…NTYICMKRAV (143 aa)) the chain is Extracellular. Disulfide bonds link Cys112-Cys121 and Cys115-Cys126. The region spanning 122-228 (HRNNCYQFFN…CANLNTYICM (107 aa)) is the C-type lectin domain. Asn137, Asn147, and Asn179 each carry an N-linked (GlcNAc...) asparagine glycan. 2 disulfide bridges follow: Cys143–Cys227 and Cys205–Cys219.

In terms of assembly, homodimer; disulfide-linked. Heterohexamer composed of two subunits of KLRK1 and four subunits of HCST/DAP10. Isoform 1 (via transmembrane domain) interacts with HCST/DAP10; the interaction is required for KLRK1 cell surface expression on activated CD8(+) T-cells, but is dispensable on activated TYROBP-expressing NK cells. Isoform 2 (via transmembrane domain) interacts with HCST/DAP10 (via transmembrane domain); the interaction is required for KLRK1 NK cell surface expression and induces NK cell-mediated cytotoxicity. Isoform 2 (via transmembrane domain) interacts with TYROBP (via transmembrane domain); the interaction is required for KLRK1 NK cell surface expression and induce NK cell-mediated cytotoxicity and cytokine secretion. Isoform 1 does not interact with TYROBP. Interacts with CEACAM1; recruits PTPN6 that dephosphorylates VAV1. Expressed in natural killer (NK) cells, activated CD8(+) alpha-beta and gamma-delta T-cells and natural killer T (NKT) cells (at protein level). May be expressed on dendritic cell (DC). Isoform 1 is strongly expressed in natural killer (NK) cells. Isoform 2 is weakly expressed in natural killer (NK) cells. Isoform 1 and isoform 2 are expressed in stimulated, but not in unstimulated, CD8(+) T-cells and macrophages.

The protein localises to the cell membrane. Functionally, functions as an activating and costimulatory receptor involved in immunosurveillance upon binding to various cellular stress-inducible ligands displayed at the surface of autologous tumor cells and virus-infected cells. Provides both stimulatory and costimulatory innate immune responses on activated killer (NK) cells, leading to cytotoxic activity. Acts as a costimulatory receptor for T-cell receptor (TCR) in CD8(+) T-cell-mediated adaptive immune responses by amplifying T-cell activation. Stimulates perforin-mediated elimination of ligand-expressing tumor cells. Signaling involves calcium influx, culminating in the expression of TNF-alpha. Participates in NK cell-mediated bone marrow graft rejection. May play a regulatory role in differentiation and survival of NK cells. Binds to ligands belonging to various subfamilies of MHC class I-related glycoproteins including RAET1A, RAET1B, RAET1C, RAET1D, RAET1E, H60 and MULT1. This chain is NKG2-D type II integral membrane protein (Klrk1), found in Mus musculus (Mouse).